Consider the following 395-residue polypeptide: Peptide-N(4)-(N-acetyl-beta-glucosaminyl)asparagine amidase (395 aa).

Zn(2+) contacts are provided by Cys131, Cys134, Cys172, and Cys175. Cys198 acts as the Nucleophile in catalysis. Residues His232 and Asp249 contribute to the active site. Substrate is bound at residue Glu252. The disordered stretch occupies residues 363-395 (PELTKTTPSTDLPSGRQSGSTEWTKSRGENGES). A compositionally biased stretch (polar residues) spans 366–385 (TKTTPSTDLPSGRQSGSTEW). Residues 386–395 (TKSRGENGES) are compositionally biased toward basic and acidic residues.

It belongs to the transglutaminase-like superfamily. PNGase family. Requires Zn(2+) as cofactor.

It is found in the cytoplasm. It catalyses the reaction Hydrolysis of an N(4)-(acetyl-beta-D-glucosaminyl)asparagine residue in which the glucosamine residue may be further glycosylated, to yield a (substituted) N-acetyl-beta-D-glucosaminylamine and a peptide containing an aspartate residue.. Its function is as follows. Specifically deglycosylates the denatured form of N-linked glycoproteins in the cytoplasm and assists their proteasome-mediated degradation. Cleaves the beta-aspartyl-glucosamine (GlcNAc) of the glycan and the amide side chain of Asn, converting Asn to Asp. Prefers proteins containing high-mannose over those bearing complex type oligosaccharides. Can recognize misfolded proteins in the endoplasmic reticulum that are exported to the cytosol to be destroyed and deglycosylate them, while it has no activity toward native proteins. Deglycosylation is a prerequisite for subsequent proteasome-mediated degradation of some, but not all, misfolded glycoproteins. The protein is Peptide-N(4)-(N-acetyl-beta-glucosaminyl)asparagine amidase (PNG1) of Candida albicans (strain SC5314 / ATCC MYA-2876) (Yeast).